A 410-amino-acid polypeptide reads, in one-letter code: Cell division protein FtsZ (410 aa).

Residues 22 to 26, 109 to 111, Glu-140, Arg-144, and Asp-188 each bind GTP; these read GGGGN and GTG. The disordered stretch occupies residues 318-410; it reads ESKKDRKPHR…STPPFFRRKR (93 aa). Residues 330–344 show a composition bias toward polar residues; the sequence is RQAVQPMQQTTQSVE. Positions 360–398 are enriched in basic and acidic residues; sequence WDIRREQNTRPKVDESSLEQVDKKEFDTFHREEPNHNDD.

Belongs to the FtsZ family. As to quaternary structure, homodimer. Polymerizes to form a dynamic ring structure in a strictly GTP-dependent manner. Interacts directly with several other division proteins.

It localises to the cytoplasm. Essential cell division protein that forms a contractile ring structure (Z ring) at the future cell division site. The regulation of the ring assembly controls the timing and the location of cell division. One of the functions of the FtsZ ring is to recruit other cell division proteins to the septum to produce a new cell wall between the dividing cells. Binds GTP and shows GTPase activity. This Enterococcus faecalis (strain ATCC 700802 / V583) protein is Cell division protein FtsZ.